A 445-amino-acid polypeptide reads, in one-letter code: Phosphoglucosamine mutase 1 (445 aa).

Ser-102 (phosphoserine intermediate) is an active-site residue. 4 residues coordinate Mg(2+): Ser-102, Asp-241, Asp-243, and Asp-245. The residue at position 102 (Ser-102) is a Phosphoserine.

It belongs to the phosphohexose mutase family. Requires Mg(2+) as cofactor. In terms of processing, activated by phosphorylation.

The enzyme catalyses alpha-D-glucosamine 1-phosphate = D-glucosamine 6-phosphate. In terms of biological role, catalyzes the conversion of glucosamine-6-phosphate to glucosamine-1-phosphate. The polypeptide is Phosphoglucosamine mutase 1 (Shewanella frigidimarina (strain NCIMB 400)).